We begin with the raw amino-acid sequence, 219 residues long: 3-dehydroquinate dehydratase (219 aa).

3-dehydroquinate contacts are provided by residues 28 to 30 (ELR) and arginine 61. Histidine 116 functions as the Proton donor/acceptor in the catalytic mechanism. The active-site Schiff-base intermediate with substrate is the lysine 142. Residues arginine 180 and glutamine 203 each contribute to the 3-dehydroquinate site.

Belongs to the type-I 3-dehydroquinase family. As to quaternary structure, homodimer.

The catalysed reaction is 3-dehydroquinate = 3-dehydroshikimate + H2O. It participates in metabolic intermediate biosynthesis; chorismate biosynthesis; chorismate from D-erythrose 4-phosphate and phosphoenolpyruvate: step 3/7. Functionally, involved in the third step of the chorismate pathway, which leads to the biosynthesis of aromatic amino acids. Catalyzes the cis-dehydration of 3-dehydroquinate (DHQ) and introduces the first double bond of the aromatic ring to yield 3-dehydroshikimate. The protein is 3-dehydroquinate dehydratase of Aquifex aeolicus (strain VF5).